A 135-amino-acid chain; its full sequence is Universal stress protein Aq_178 (135 aa).

It belongs to the universal stress protein A family.

The polypeptide is Universal stress protein Aq_178 (Aquifex aeolicus (strain VF5)).